We begin with the raw amino-acid sequence, 166 residues long: MIRGWTIFTLCKPSALVGSSHFNKQFNWAKSQLQFATKVPQQPYAKTESILPTLQEPDTKPAIDRHTVQLLERLSLVDLETNDALETLEDSIGFASRILTIGTEGVEPLYTVLERERLSLREDVVNDGDLQTDVLRNAAVTEEEYFVAPPGNIPLELQENSRPIAH.

The N-terminal 44 residues, 1 to 44, are a transit peptide targeting the mitochondrion; it reads MIRGWTIFTLCKPSALVGSSHFNKQFNWAKSQLQFATKVPQQPY.

Belongs to the GatC family. As to quaternary structure, subunit of the heterotrimeric GatCAB amidotransferase (AdT) complex, composed of A, B and C subunits.

Its subcellular location is the mitochondrion. It carries out the reaction L-glutamyl-tRNA(Gln) + L-glutamine + ATP + H2O = L-glutaminyl-tRNA(Gln) + L-glutamate + ADP + phosphate + H(+). Allows the formation of correctly charged Gln-tRNA(Gln) through the transamidation of misacylated Glu-tRNA(Gln) in the mitochondria. The reaction takes place in the presence of glutamine and ATP through an activated gamma-phospho-Glu-tRNA(Gln). This chain is Glutamyl-tRNA(Gln) amidotransferase subunit C, mitochondrial, found in Anopheles darlingi (Mosquito).